A 327-amino-acid chain; its full sequence is MVAVKALLFACTLRTCVFKPCCDMAIFLIFLNAFIWSSSFALSKSAMEAAAPLFVTGSRMVLAGVVLFGLLLCKRESLRLPRPAIMPIVLLSVIGFYLTNVLEFIGLQRLSSSTACFIYGFSPFTAAFCSYVQLREVVTWKKLGGLSLGLVSYLVYLLFGGSEDVAEWGWQLGLPELLLIAATCLSSYGWTLLRKLGRRCESLSMTAINAYAMVIAGVLSLIHSAVTEVWNPVPVENPLLFLQAIGALVIFSNLICYNLFAKLLRSFSSTFLSFCNLVMPLFASFFGWLLLGESFPPGLLFAVGFMVLGCRLIYHEEFRQGYVLTSE.

10 helical membrane-spanning segments follow: residues 22–42 (CDMA…SFAL), 53–73 (LFVT…LLLC), 85–105 (IMPI…LEFI), 114–134 (TACF…YVQL), 143–163 (LGGL…GGSE), 165–185 (VAEW…ATCL), 202–222 (SLSM…LSLI), 240–260 (LFLQ…YNLF), 271–291 (FLSF…WLLL), and 294–314 (SFPP…RLIY). An EamA 1 domain is found at 34 to 157 (FIWSSSFALS…LGLVSYLVYL (124 aa)). The EamA 2 domain occupies 189 to 313 (GWTLLRKLGR…GFMVLGCRLI (125 aa)).

Belongs to the drug/metabolite transporter (DMT) superfamily. 10 TMS drug/metabolite exporter (DME) (TC 2.A.7.3) family.

Its subcellular location is the cell membrane. Its activity is regulated as follows. CCCP treatment reduces SAM intracellular uptake by 50%. Its function is as follows. Transports S-adenosylmethionine (SAM) and S-adenosylhomocysteine (SAH). Allows bacteria to acquire SAM from the eukaryotic host cell and to likely remove the toxic by-product SAH. This chain is S-adenosylmethionine/S-adenosylhomocysteine transporter, found in Chlamydia trachomatis serovar L2 (strain ATCC VR-902B / DSM 19102 / 434/Bu).